The primary structure comprises 312 residues: Serpentine receptor class gamma-31 (312 aa).

The next 7 membrane-spanning stretches (helical) occupy residues 6-26 (LITQFIYGTISTIIYSLTVVF), 38-58 (FLKLYICQFFFNMWMYWNFYI), 92-112 (FIFCQYHLGFMSYSNLFLTSI), 132-152 (TYILIALIFITPILFTYPLLV), 180-200 (FILVWMVVTVLLSIIANIICW), 218-238 (LFLVSFVTFVINCGVFSIAML), and 259-279 (LLSPFANDLLSLSTPYVLIIF).

Belongs to the nematode receptor-like protein srg family.

The protein resides in the membrane. The polypeptide is Serpentine receptor class gamma-31 (srg-31) (Caenorhabditis elegans).